The following is a 138-amino-acid chain: Large ribosomal subunit protein uL16 (138 aa).

Over residues 1–13 (MLQPSRRKYRKEQ) the composition is skewed to basic residues. Positions 1 to 24 (MLQPSRRKYRKEQKGRNTGLASRG) are disordered.

It belongs to the universal ribosomal protein uL16 family. As to quaternary structure, part of the 50S ribosomal subunit.

Its function is as follows. Binds 23S rRNA and is also seen to make contacts with the A and possibly P site tRNAs. This Bordetella bronchiseptica (strain ATCC BAA-588 / NCTC 13252 / RB50) (Alcaligenes bronchisepticus) protein is Large ribosomal subunit protein uL16.